The chain runs to 320 residues: Aldose reductase (320 aa).

Catalysis depends on Tyr60, which acts as the Proton donor. His121 provides a ligand contact to substrate. Position 215-269 (215-269 (SPLGSSEKNLAHDPVVEKVANKLNKTPGQVLIKWALQRGTSVIPKSSKDERIKEN)) interacts with NADP(+).

It belongs to the aldo/keto reductase family.

The catalysed reaction is an alditol + NAD(+) = an aldose + NADH + H(+). It carries out the reaction an alditol + NADP(+) = an aldose + NADPH + H(+). This Hordeum vulgare (Barley) protein is Aldose reductase.